Consider the following 219-residue polypeptide: Vacuolar protein sorting-associated protein 32 homolog 2 (219 aa).

2 coiled-coil regions span residues 10–41 (KQEANALQTLDKLNETLEMLEKKEKVLLKKAG) and 117–176 (TNID…QLLQ). The segment at 168-219 (EELESQLLQPATTAPPLPSVPVPAGRQPARPVPQKRTAEEEELAALQAEMAL) is disordered.

Belongs to the SNF7 family. As to quaternary structure, component of the endosomal sorting required for transport complex III (ESCRT-III), composed at least of VPS2, VPS20, VPS24 and VPS32. Interacts with SKD1. Interacts with BRO1/ALIX.

It localises to the endosome. Functionally, component of the ESCRT-III complex, which is required for multivesicular bodies (MVBs) formation and sorting of endosomal cargo proteins into MVBs. The ESCRT-III complex is probably involved in the concentration of MVB cargo. The polypeptide is Vacuolar protein sorting-associated protein 32 homolog 2 (VPS32.2) (Arabidopsis thaliana (Mouse-ear cress)).